Reading from the N-terminus, the 544-residue chain is Membrane protein insertase YidC (544 aa).

A run of 5 helical transmembrane segments spans residues 13-33 (LSLFLIGLFMLINDIFSSNIL), 343-363 (WGLSIIFLTIVVRILIFPLTF), 409-429 (LGGCLPVILQLPIFFALYSLV), 461-481 (LYFVSWTDIRILPFIMMFTQL), and 506-526 (MPIMFFFILYNMPSGLLIYWI).

It belongs to the OXA1/ALB3/YidC family. Type 1 subfamily. Interacts with the Sec translocase complex via SecD. Specifically interacts with transmembrane segments of nascent integral membrane proteins during membrane integration.

The protein localises to the cell inner membrane. Required for the insertion and/or proper folding and/or complex formation of integral membrane proteins into the membrane. Involved in integration of membrane proteins that insert both dependently and independently of the Sec translocase complex, as well as at least some lipoproteins. Aids folding of multispanning membrane proteins. This is Membrane protein insertase YidC from Borreliella burgdorferi (strain ZS7) (Borrelia burgdorferi).